The chain runs to 515 residues: WUSCHEL-related homeobox 12 (515 aa).

2 stretches are compositionally biased toward polar residues: residues 23 to 32 (QQQPDMNGNG) and 44 to 57 (TAATTGNGKPSLLS). Disordered regions lie at residues 23–76 (QQQP…WNPR), 130–156 (NKLRAAGHHHHHGRAAALPRASAPPST), and 176–195 (LLAATSSSSSSSDRSSGSSK). Residues 62–71 (EGTRNPEPKP) are compositionally biased toward basic and acidic residues. The segment at residues 68–132 (EPKPRWNPRP…NRKSRTKNKL (65 aa)) is a DNA-binding region (homeobox; WUS-type). Basic residues predominate over residues 130-143 (NKLRAAGHHHHHGR). Composition is skewed to low complexity over residues 144 to 156 (AAALPRASAPPST) and 177 to 195 (LAATSSSSSSSDRSSGSSK).

Belongs to the WUS homeobox family.

The protein localises to the nucleus. Functionally, transcription factor which may be involved in developmental processes. This is WUSCHEL-related homeobox 12 (WOX12) from Oryza sativa subsp. japonica (Rice).